The following is a 136-amino-acid chain: MARTKQTARKSTGGKAPRKQLATKAARKSAPATGGVKKPHRYRPGTVALREIRRYQKSTELLIRKLPFQRLVREIAQEFKTDLRFQSSAVMALQEAREAYLVGLFEDTNLCAIHAKRVTIMPKDIQLVSRIRGERA.

The interval 1–43 (MARTKQTARKSTGGKAPRKQLATKAARKSAPATGGVKKPHRYR) is disordered. Arg3 is modified (asymmetric dimethylarginine). Residue Arg3 is modified to Citrulline; alternate. The residue at position 4 (Thr4) is a Phosphothreonine. Position 5 is an allysine; alternate (Lys5). Lys5 bears the N6,N6,N6-trimethyllysine; alternate mark. Lys5 bears the N6,N6-dimethyllysine; alternate mark. An N6-(2-hydroxyisobutyryl)lysine; alternate modification is found at Lys5. Lys5 bears the N6-(beta-hydroxybutyryl)lysine; alternate mark. The residue at position 5 (Lys5) is an N6-acetyllysine; alternate. At Lys5 the chain carries N6-methyllysine; alternate. Gln6 carries the post-translational modification 5-glutamyl dopamine; alternate. Gln6 carries the 5-glutamyl serotonin; alternate modification. Thr7 carries the phosphothreonine modification. Position 9 is a citrulline; alternate (Arg9). Arg9 carries the symmetric dimethylarginine modification. Lys10 bears the N6,N6,N6-trimethyllysine; alternate mark. Lys10 is subject to N6,N6-dimethyllysine; alternate. Lys10 bears the N6-(2-hydroxyisobutyryl)lysine; alternate mark. Lys10 bears the N6-(beta-hydroxybutyryl)lysine; alternate mark. Position 10 is an N6-acetyllysine; alternate (Lys10). An N6-methyllysine; alternate modification is found at Lys10. Lys10 is subject to N6-lactoyllysine; alternate. Residue Ser11 is modified to ADP-ribosylserine; alternate. Phosphoserine; alternate is present on Ser11. At Thr12 the chain carries Phosphothreonine. Lys15 carries the post-translational modification N6-(2-hydroxyisobutyryl)lysine; alternate. N6-(beta-hydroxybutyryl)lysine; alternate is present on Lys15. At Lys15 the chain carries N6-acetyllysine; alternate. Lys15 carries the N6-lactoyllysine; alternate modification. An N6-glutaryllysine; alternate modification is found at Lys15. Lys15 is modified (N6-succinyllysine; alternate). An Asymmetric dimethylarginine modification is found at Arg18. Arg18 carries the post-translational modification Citrulline; alternate. N6-(2-hydroxyisobutyryl)lysine; alternate is present on residues Lys19 and Lys24. Lys19 and Lys24 each carry N6-(beta-hydroxybutyryl)lysine; alternate. N6-acetyllysine; alternate is present on residues Lys19 and Lys24. Lys19 and Lys24 each carry N6-methyllysine; alternate. N6-lactoyllysine; alternate occurs at positions 19 and 24. Residues Lys19 and Lys24 each carry the N6-glutaryllysine; alternate modification. 2 positions are modified to N6-butyryllysine; alternate: Lys19 and Lys24. Arg27 carries the citrulline modification. Position 28 is an N6,N6,N6-trimethyllysine; alternate (Lys28). An N6,N6-dimethyllysine; alternate modification is found at Lys28. Lys28 is subject to N6-(2-hydroxyisobutyryl)lysine; alternate. Lys28 bears the N6-acetyllysine; alternate mark. Lys28 bears the N6-methyllysine; alternate mark. Lys28 is subject to N6-lactoyllysine; alternate. Lys28 carries the N6-glutaryllysine; alternate modification. ADP-ribosylserine; alternate is present on Ser29. Ser29 carries the post-translational modification Phosphoserine; alternate. Residue Lys37 is modified to N6,N6,N6-trimethyllysine; alternate. An N6,N6-dimethyllysine; alternate modification is found at Lys37. An N6-(2-hydroxyisobutyryl)lysine; alternate modification is found at Lys37. The residue at position 37 (Lys37) is an N6-acetyllysine; alternate. Lys37 is subject to N6-methyllysine; alternate. Lys38 is subject to N6-methyllysine. A Phosphotyrosine modification is found at Tyr42. An N6,N6,N6-trimethyllysine; alternate modification is found at Lys57. N6-(2-hydroxyisobutyryl)lysine; alternate is present on Lys57. Lys57 is modified (N6-(beta-hydroxybutyryl)lysine; alternate). Lys57 is modified (N6-acetyllysine; alternate). Position 57 is an N6-lactoyllysine; alternate (Lys57). Residue Lys57 is modified to N6-glutaryllysine; alternate. At Lys57 the chain carries N6-succinyllysine; alternate. The residue at position 57 (Lys57) is an N6-methyllysine. Residue Ser58 is modified to Phosphoserine. N6-(2-hydroxyisobutyryl)lysine; alternate is present on residues Lys65 and Lys80. Residues Lys65 and Lys80 each carry the N6-methyllysine; alternate modification. N6,N6,N6-trimethyllysine; alternate is present on Lys80. An N6,N6-dimethyllysine; alternate modification is found at Lys80. An N6-acetyllysine; alternate modification is found at Lys80. Residue Lys80 is modified to N6-lactoyllysine; alternate. Lys80 is subject to N6-glutaryllysine; alternate. At Lys80 the chain carries N6-succinyllysine; alternate. Thr81 is subject to Phosphothreonine. Residue Ser87 is modified to Phosphoserine. The residue at position 108 (Thr108) is a Phosphothreonine. An N6-acetyllysine; alternate mark is found at Lys116 and Lys123. An N6-glutaryllysine; alternate mark is found at Lys116 and Lys123. Lys123 carries the post-translational modification N6-(2-hydroxyisobutyryl)lysine; alternate. Lys123 carries the N6-methyllysine; alternate modification. An N6-succinyllysine; alternate modification is found at Lys123.

It belongs to the histone H3 family. The nucleosome is a histone octamer containing two molecules each of H2A, H2B, H3 and H4 assembled in one H3-H4 heterotetramer and two H2A-H2B heterodimers. The octamer wraps approximately 147 bp of DNA. During nucleosome assembly the chaperone ASF1A interacts with the histone H3-H4 heterodimer. Post-translationally, acetylation is generally linked to gene activation. Acetylation on Lys-10 (H3K9ac) impairs methylation at Arg-9 (H3R8me2s). Acetylation on Lys-19 (H3K18ac) and Lys-24 (H3K24ac) favors methylation at Arg-18 (H3R17me). Acetylation at Lys-123 (H3K122ac) by EP300/p300 plays a central role in chromatin structure: localizes at the surface of the histone octamer and stimulates transcription, possibly by promoting nucleosome instability. In terms of processing, citrullination at Arg-9 (H3R8ci) and/or Arg-18 (H3R17ci) by PADI4 impairs methylation and represses transcription. Asymmetric dimethylation at Arg-18 (H3R17me2a) by CARM1 is linked to gene activation. Symmetric dimethylation at Arg-9 (H3R8me2s) by PRMT5 is linked to gene repression. Asymmetric dimethylation at Arg-3 (H3R2me2a) by PRMT6 is linked to gene repression and is mutually exclusive with H3 Lys-5 methylation (H3K4me2 and H3K4me3). H3R2me2a is present at the 3' of genes regardless of their transcription state and is enriched on inactive promoters, while it is absent on active promoters. Post-translationally, methylation at Lys-5 (H3K4me), Lys-37 (H3K36me) and Lys-80 (H3K79me) are linked to gene activation. Methylation at Lys-5 (H3K4me) facilitates subsequent acetylation of H3 and H4. Methylation at Lys-80 (H3K79me) is associated with DNA double-strand break (DSB) responses and is a specific target for TP53BP1. Methylation at Lys-10 (H3K9me) and Lys-28 (H3K27me) are linked to gene repression. Methylation at Lys-10 (H3K9me) is a specific target for HP1 proteins (CBX1, CBX3 and CBX5) and prevents subsequent phosphorylation at Ser-11 (H3S10ph) and acetylation of H3 and H4. Methylation at Lys-5 (H3K4me) and Lys-80 (H3K79me) require preliminary monoubiquitination of H2B at 'Lys-120'. Methylation at Lys-10 (H3K9me) and Lys-28 (H3K27me) are enriched in inactive X chromosome chromatin. Monomethylation at Lys-57 (H3K56me1) by EHMT2/G9A in G1 phase promotes interaction with PCNA and is required for DNA replication. In terms of processing, phosphorylated at Thr-4 (H3T3ph) by HASPIN during prophase and dephosphorylated during anaphase. Phosphorylation at Ser-11 (H3S10ph) by AURKB is crucial for chromosome condensation and cell-cycle progression during mitosis and meiosis. In addition phosphorylation at Ser-11 (H3S10ph) by RPS6KA4 and RPS6KA5 is important during interphase because it enables the transcription of genes following external stimulation, like mitogens, stress, growth factors or UV irradiation and result in the activation of genes, such as c-fos and c-jun. Phosphorylation at Ser-11 (H3S10ph), which is linked to gene activation, prevents methylation at Lys-10 (H3K9me) but facilitates acetylation of H3 and H4. Phosphorylation at Ser-11 (H3S10ph) by AURKB mediates the dissociation of HP1 proteins (CBX1, CBX3 and CBX5) from heterochromatin. Phosphorylation at Ser-11 (H3S10ph) is also an essential regulatory mechanism for neoplastic cell transformation. Phosphorylated at Ser-29 (H3S28ph) by MAP3K20 isoform 1, RPS6KA5 or AURKB during mitosis or upon ultraviolet B irradiation. Phosphorylation at Thr-7 (H3T6ph) by PRKCB is a specific tag for epigenetic transcriptional activation that prevents demethylation of Lys-5 (H3K4me) by LSD1/KDM1A. At centromeres, specifically phosphorylated at Thr-12 (H3T11ph) from prophase to early anaphase, by DAPK3 and PKN1. Phosphorylation at Thr-12 (H3T11ph) by PKN1 or isoform M2 of PKM (PKM2) is a specific tag for epigenetic transcriptional activation that promotes demethylation of Lys-10 (H3K9me) by KDM4C/JMJD2C. Phosphorylation at Tyr-42 (H3Y41ph) by JAK2 promotes exclusion of CBX5 (HP1 alpha) from chromatin. Ubiquitinated. Post-translationally, lysine deamination at Lys-5 (H3K4all) to form allysine is mediated by LOXL2. Allysine formation by LOXL2 only takes place on H3K4me3 and results in gene repression. In terms of processing, butyrylation of histones marks active promoters and competes with histone acetylation. It is present during late spermatogenesis. Succinylation at Lys-80 (H3K79succ) by KAT2A takes place with a maximum frequency around the transcription start sites of genes. It gives a specific tag for epigenetic transcription activation. Desuccinylation at Lys-123 (H3K122succ) by SIRT7 in response to DNA damage promotes chromatin condensation and double-strand breaks (DSBs) repair. Post-translationally, serine ADP-ribosylation constitutes the primary form of ADP-ribosylation of proteins in response to DNA damage. Serine ADP-ribosylation at Ser-11 (H3S10ADPr) is mutually exclusive with phosphorylation at Ser-11 (H3S10ph) and impairs acetylation at Lys-10 (H3K9ac).

The protein localises to the nucleus. The protein resides in the chromosome. Functionally, core component of nucleosome. Nucleosomes wrap and compact DNA into chromatin, limiting DNA accessibility to the cellular machineries which require DNA as a template. Histones thereby play a central role in transcription regulation, DNA repair, DNA replication and chromosomal stability. DNA accessibility is regulated via a complex set of post-translational modifications of histones, also called histone code, and nucleosome remodeling. The protein is Histone H3-7 of Homo sapiens (Human).